Consider the following 208-residue polypeptide: FMN-dependent NADH:quinone oxidoreductase 1 (208 aa).

This sequence belongs to the azoreductase type 1 family. In terms of assembly, homodimer. FMN is required as a cofactor.

The catalysed reaction is 2 a quinone + NADH + H(+) = 2 a 1,4-benzosemiquinone + NAD(+). It catalyses the reaction N,N-dimethyl-1,4-phenylenediamine + anthranilate + 2 NAD(+) = 2-(4-dimethylaminophenyl)diazenylbenzoate + 2 NADH + 2 H(+). Quinone reductase that provides resistance to thiol-specific stress caused by electrophilic quinones. Its function is as follows. Also exhibits azoreductase activity. Catalyzes the reductive cleavage of the azo bond in aromatic azo compounds to the corresponding amines. The polypeptide is FMN-dependent NADH:quinone oxidoreductase 1 (Bacillus thuringiensis subsp. konkukian (strain 97-27)).